The sequence spans 521 residues: Acidic amino acid decarboxylase GADL1 (521 aa).

Basic and acidic residues predominate over residues 1 to 12 (MSLLPDRERAPD). Residues 1–20 (MSLLPDRERAPDGDISPQEM) form a disordered region. Lys333 bears the N6-(pyridoxal phosphate)lysine mark.

It belongs to the group II decarboxylase family. In terms of assembly, homodimer. Pyridoxal 5'-phosphate is required as a cofactor. In terms of tissue distribution, expressed at highest levels in skeletal muscles. Also detected heart, spleen and rumen.

It carries out the reaction L-aspartate + H(+) = beta-alanine + CO2. The enzyme catalyses 3-sulfino-L-alanine + H(+) = hypotaurine + CO2. The catalysed reaction is L-cysteate + H(+) = taurine + CO2. In terms of biological role, catalyzes the decarboxylation of L-aspartate, 3-sulfino-L-alanine (cysteine sulfinic acid), and L-cysteate to beta-alanine, hypotaurine and taurine, respectively. The preferred substrate is L-aspartate. Does not exhibit any decarboxylation activity toward glutamate. This Bos taurus (Bovine) protein is Acidic amino acid decarboxylase GADL1 (GADL1).